The following is a 317-amino-acid chain: Ferrochelatase (317 aa).

Positions 191 and 271 each coordinate Fe cation.

Belongs to the ferrochelatase family.

Its subcellular location is the cytoplasm. It catalyses the reaction heme b + 2 H(+) = protoporphyrin IX + Fe(2+). It functions in the pathway porphyrin-containing compound metabolism; protoheme biosynthesis; protoheme from protoporphyrin-IX: step 1/1. Functionally, catalyzes the ferrous insertion into protoporphyrin IX. This chain is Ferrochelatase, found in Thermus thermophilus (strain ATCC BAA-163 / DSM 7039 / HB27).